Here is a 107-residue protein sequence, read N- to C-terminus: L-rhamnose mutarotase (107 aa).

Substrate is bound at residue tyrosine 21. Residue histidine 25 is the Proton donor of the active site. Residues tyrosine 44 and 79–80 each bind substrate; that span reads WW. Residues 88–107 are disordered; it reads ETNPDNSPKTNSLKEVFHLD. The segment covering 90 to 100 has biased composition (polar residues); sequence NPDNSPKTNSL.

This sequence belongs to the rhamnose mutarotase family. In terms of assembly, homodimer.

Its subcellular location is the cytoplasm. The catalysed reaction is alpha-L-rhamnose = beta-L-rhamnose. The protein operates within carbohydrate metabolism; L-rhamnose metabolism. Involved in the anomeric conversion of L-rhamnose. The sequence is that of L-rhamnose mutarotase from Flavobacterium johnsoniae (strain ATCC 17061 / DSM 2064 / JCM 8514 / BCRC 14874 / CCUG 350202 / NBRC 14942 / NCIMB 11054 / UW101) (Cytophaga johnsonae).